Here is a 92-residue protein sequence, read N- to C-terminus: uncharacterized protein (92 aa).

Functionally, homolog of shope fibroma virus T4A ORF. This is an uncharacterized protein from Swinepox virus (strain Kasza) (SWPV).